A 2225-amino-acid chain; its full sequence is Multifunctional protein CAD (2225 aa).

Alanine 2 bears the N-acetylalanine mark. Residues 2-365 are GATase (Glutamine amidotransferase); the sequence is AALVLEDGSV…TVREAVAGNP (364 aa). L-glutamine is bound by residues serine 44, glycine 222, and glycine 224. A Glutamine amidotransferase type-1 domain is found at 177–363; the sequence is RICALDCGLK…LETVREAVAG (187 aa). The active-site Nucleophile; for GATase activity is cysteine 252. 5 residues coordinate L-glutamine: leucine 253, glutamine 256, asparagine 294, glycine 296, and phenylalanine 297. Active-site for GATase activity residues include histidine 336 and glutamate 338. A linker region spans residues 366–394; that stretch reads GGQTVKERLVQRLCPPGLLIPGSGLPPPR. Positions 395–933 are CPSase A; that stretch reads KVLILGSGGL…NTHDLDFRTP (539 aa). The tract at residues 395–1455 is CPSase (Carbamoyl phosphate synthase); sequence KVLILGSGGL…APPLKVHVDC (1061 aa). Threonine 456 carries the phosphothreonine; by MAPK1 modification. The ATP site is built by arginine 515, arginine 555, glycine 561, glycine 562, lysine 592, glutamate 599, glycine 625, isoleucine 626, histidine 627, glutamine 668, and glutamate 682. The ATP-grasp 1 domain occupies 519–711; that stretch reads AARMAEIGEH…LAYVAAKLAL (193 aa). Residues glutamine 668, glutamate 682, and asparagine 684 each coordinate Mg(2+). The Mn(2+) site is built by glutamine 668, glutamate 682, and asparagine 684. Lysine 747 is subject to N6-acetyllysine. A CPSase B region spans residues 934–1455; the sequence is HVLVLGSGVY…APPLKVHVDC (522 aa). At serine 1038 the chain carries Phosphoserine. One can recognise an ATP-grasp 2 domain in the interval 1052–1243; that stretch reads SRLLDTIGIS…LVALATRIIM (192 aa). The ATP site is built by arginine 1088, lysine 1127, isoleucine 1129, glutamate 1134, glycine 1159, valine 1160, histidine 1161, serine 1162, glutamine 1202, and glutamate 1214. Residues glutamine 1202, glutamate 1214, and asparagine 1216 each coordinate Mg(2+). Residues glutamine 1202, glutamate 1214, and asparagine 1216 each contribute to the Mn(2+) site. Positions 1308–1462 constitute an MGS-like domain; it reads FKIPKKNILL…VDCMTSQKLV (155 aa). Serine 1406 is modified (phosphoserine; by PKA). Residue lysine 1411 is modified to N6-acetyllysine. Residues 1456–1788 are DHOase (dihydroorotase); sequence MTSQKLVRLP…VKGTIRRVVL (333 aa). 2 residues coordinate Zn(2+): histidine 1471 and histidine 1473. Positions 1475 and 1505 each coordinate (S)-dihydroorotate. Zn(2+) contacts are provided by lysine 1556, histidine 1590, cysteine 1613, histidine 1614, and glutamate 1637. Lysine 1556 carries the N6-carboxylysine modification. Residue arginine 1661 participates in (S)-dihydroorotate binding. Residue aspartate 1686 participates in Zn(2+) binding. Residue aspartate 1686 is the For DHOase activity of the active site. Histidine 1690 and proline 1702 together coordinate (S)-dihydroorotate. The segment at 1789 to 1917 is linker; that stretch reads RGEVAYIDGQ…GLLHPQTSPL (129 aa). Residues 1813-1911 are disordered; that stretch reads PQGAVPQPPP…QNLGSSGLLH (99 aa). A compositionally biased stretch (low complexity) spans 1825-1834; the sequence is PATTEITTTP. Serine 1859 is subject to Phosphoserine; by RPS6KB1 and PKA. Residues 1866–1878 show a composition bias toward basic and acidic residues; it reads EEPKEKPSRKVVE. The residue at position 1873 (serine 1873) is a Phosphoserine; by PKC; in vitro. Residue threonine 1884 is modified to Phosphothreonine. Residues 1899-1911 are compositionally biased toward polar residues; it reads ASPQNLGSSGLLH. Serine 1900 and serine 1938 each carry phosphoserine. Residues 1918–2225 are ATCase (Aspartate transcarbamylase); it reads LHSLVGQHIL…ALLATVLGRF (308 aa). Carbamoyl phosphate-binding residues include arginine 1975 and threonine 1976. Lysine 2003 provides a ligand contact to L-aspartate. Carbamoyl phosphate is bound by residues arginine 2024, histidine 2052, and glutamine 2055. L-aspartate-binding residues include arginine 2085 and arginine 2146. Carbamoyl phosphate contacts are provided by methionine 2185 and proline 2186.

In the N-terminal section; belongs to the CarA family. This sequence in the 2nd section; belongs to the CarB family. It in the 3rd section; belongs to the metallo-dependent hydrolases superfamily. DHOase family. CAD subfamily. The protein in the C-terminal section; belongs to the aspartate/ornithine carbamoyltransferase superfamily. ATCase family. Homohexamer. Interacts with CIPC. Zn(2+) is required as a cofactor. Mg(2+) serves as cofactor. Requires Mn(2+) as cofactor. In terms of processing, activated by MAP kinase (Erk1/2) phosphorylation just prior to the S phase of the cell cycle, when the demand for pyrimidine nucleotides is greatest, and down-regulated as the cells emerge from S phase by protein kinase A (PKA) phosphorylation. Phosphorylation at Ser-1859 by RPS6KB1 downstream of MTOR promotes oligomerization and stimulates dihydroorotase activity. Phosphorylation at Ser-1406 reduces sensitivity to feedback inhibition by UTP.

It localises to the cytoplasm. It is found in the nucleus. It catalyses the reaction hydrogencarbonate + L-glutamine + 2 ATP + H2O = carbamoyl phosphate + L-glutamate + 2 ADP + phosphate + 2 H(+). The enzyme catalyses L-glutamine + H2O = L-glutamate + NH4(+). It carries out the reaction hydrogencarbonate + NH4(+) + 2 ATP = carbamoyl phosphate + 2 ADP + phosphate + 2 H(+). The catalysed reaction is carbamoyl phosphate + L-aspartate = N-carbamoyl-L-aspartate + phosphate + H(+). It catalyses the reaction (S)-dihydroorotate + H2O = N-carbamoyl-L-aspartate + H(+). It functions in the pathway pyrimidine metabolism; UMP biosynthesis via de novo pathway; (S)-dihydroorotate from bicarbonate: step 1/3. It participates in pyrimidine metabolism; UMP biosynthesis via de novo pathway; (S)-dihydroorotate from bicarbonate: step 2/3. The protein operates within pyrimidine metabolism; UMP biosynthesis via de novo pathway; (S)-dihydroorotate from bicarbonate: step 3/3. Allosterically regulated and controlled by phosphorylation. 5-phosphoribose 1-diphosphate (PRPP) is an activator while UMP and UTP are inhibitors of the CPSase reaction. Its function is as follows. Multifunctional protein that encodes the first 3 enzymatic activities of the de novo pyrimidine pathway: carbamoylphosphate synthetase (CPSase; EC 6.3.5.5), aspartate transcarbamylase (ATCase; EC 2.1.3.2) and dihydroorotase (DHOase; EC 3.5.2.3). The CPSase-function is accomplished in 2 steps, by a glutamine-dependent amidotransferase activity (GATase) that binds and cleaves glutamine to produce ammonia, followed by an ammonium-dependent carbamoyl phosphate synthetase, which reacts with the ammonia, hydrogencarbonate and ATP to form carbamoyl phosphate. The endogenously produced carbamoyl phosphate is sequestered and channeled to the ATCase active site. ATCase then catalyzes the formation of carbamoyl-L-aspartate from L-aspartate and carbamoyl phosphate. In the last step, DHOase catalyzes the cyclization of carbamoyl aspartate to dihydroorotate. This is Multifunctional protein CAD (CAD) from Mesocricetus auratus (Golden hamster).